We begin with the raw amino-acid sequence, 162 residues long: Nucleotide-binding protein Adeh_0094 (162 aa).

The protein belongs to the YajQ family.

In terms of biological role, nucleotide-binding protein. The protein is Nucleotide-binding protein Adeh_0094 of Anaeromyxobacter dehalogenans (strain 2CP-C).